The chain runs to 1237 residues: MSSAPRRPASGADSFRTPEPESLGPGTPGFPEQEEDELHRTLGVERFEEILQEAGSRGGEEPGRSYGEEDFEYHRQSSHHIHHPLSTHLPPDARRRKTPQGPGRKPRRRPGASPTGATPTIEEGEEDEEEANEAEGARAPTEPSPASTPSSVQFFLQEDEGAERKAERTSPSPPTLLPHQEAAPWATEGAQTGVPVEEVAVVASGTAGGDNGGASGRPLTKAQPGHRSYNLQERRRIGSMTGAEQALLPRVPTDESEAQTLATADLDLMKSHRFEDVPGVRRHLVRKNAKGSAQSSREGREPGPTPRSRPRAPHKPHEVFVELNELLLDKNQEPQWRETARWIKFEEDVEEETERWGKPHVASLSFRSLLELRRTLAHGAVLLDLDQQTLPGVAHQVVEQMVISDQIKAEDRANVLRALLLKHSHPSDEKDFSFPRNISAGSLGSLLGHHHGQGAESDPHVTEPLIGGIPETRLDVERERDVPPSAPPAGITRSKSKHELKLLEKIPENAEATVVLVGCVEFLSRPTMAFVRLREAVELDAVLEVPVPVRFLFLLLGPSSANMDYHEIGRSISTLMSDKQFHEAAYLADEREDLLTAINAFLDCSVVLPPSEVQGEELLRSVAHFQRQMLKKREEQGRLLPPGLGLEPKSAQDKALLQMVEAAGAAEDDPLRRTGRPFGGLIRDVRRRYPHYLSDFRDALDPQCVAAVIFIYFAALSPAITFGGLLGEKTQDLIGVSELIMSTALQGVIFCLLGAQPLLVIGFSGPLLVFEEAFFTFCSSNQLEYLVGRVWIGFWLVLLALLMVALEGSFLVRFVSRFTQEIFAFLISLIFIYETFYKLIKIFQEHPLHGCSVSNSSETDSSENATWAGAGSTLGPANRSSAGQAGQGRPRGQPNTALLSLVLMAGTFFIAFFLRKFKNSRFFPGRIRRVIGDFGVPIAILIMVLVDYSIEDTYTQKLSVPSGFSVTAPDKRGWVINPLGEKSPFPVWMMVASLLPAILVFILIFMETQITTLIISKKERMLQKGSGFHLDLLLIVAMGGICALFGLPWLAAATVRSVTHANALTVMSKAVAPGDKPKIQEVKEQRVTGLLVALLVGLSIVIGDLLRQIPLAVLFGIFLYMGVTSLNGIQFYERLHLLLMPPKHHPDVTYVKKVRTLRMHLFTALQLLCLALLWAVMSTAASLAFPFILILTVPLRMVVLTRIFTEREMKCLDANEAEPVFDEREGVDEYNEMPMPV.

Residues 1-237 (MSSAPRRPAS…SYNLQERRRI (237 aa)) form a disordered region. The Cytoplasmic portion of the chain corresponds to 1–703 (MSSAPRRPAS…SDFRDALDPQ (703 aa)). Composition is skewed to basic and acidic residues over residues 37-49 (ELHR…RFEE) and 58-75 (GGEE…EYHR). 2 stretches are compositionally biased toward basic residues: residues 76 to 85 (QSSHHIHHPL) and 94 to 110 (RRRK…RRRP). At S113 the chain carries Phosphoserine. Over residues 122-133 (EEGEEDEEEANE) the composition is skewed to acidic residues. Low complexity predominate over residues 137–151 (ARAPTEPSPASTPSS). Phosphoserine occurs at positions 144, 170, and 172. The segment covering 206–215 (TAGGDNGGAS) has biased composition (gly residues). Residue S239 is modified to Phosphoserine. Residue T253 is modified to Phosphothreonine. Position 270 is an N6-methyllysine (K270). A disordered region spans residues 281–316 (RRHLVRKNAKGSAQSSREGREPGPTPRSRPRAPHKP). At S439 the chain carries Phosphoserine. The disordered stretch occupies residues 445 to 464 (SLLGHHHGQGAESDPHVTEP). 4 helical membrane passes run 704–727 (CVAA…GLLG), 733–770 (LIGV…LLVF), 790–812 (VWIG…SFLV), and 822–843 (IFAF…IKIF). The segment at 704–1237 (CVAAVIFIYF…DEYNEMPMPV (534 aa)) is membrane (anion exchange). The Extracellular segment spans residues 844-896 (QEHPLHGCSVSNSSETDSSENATWAGAGSTLGPANRSSAGQAGQGRPRGQPNT). N-linked (GlcNAc...) asparagine glycans are attached at residues N855, N864, and N878. Residues 897–914 (ALLSLVLMAGTFFIAFFL) form a helical membrane-spanning segment. The Cytoplasmic portion of the chain corresponds to 915-929 (RKFKNSRFFPGRIRR). Helical transmembrane passes span 930 to 950 (VIGD…DYSI), 984 to 1006 (PFPV…LIFM), 1032 to 1053 (LLLI…LAAA), 1087 to 1132 (VTGL…IQFY), and 1159 to 1195 (MHLF…TVPL). The S-palmitoyl cysteine moiety is linked to residue C1169.

The protein belongs to the anion exchanger (TC 2.A.31) family. In terms of tissue distribution, expressed in the ileum (at protein level).

It localises to the cell membrane. The protein localises to the apical cell membrane. It is found in the basolateral cell membrane. The enzyme catalyses hydrogencarbonate(in) + chloride(out) = hydrogencarbonate(out) + chloride(in). In terms of biological role, sodium-independent anion exchanger which mediates the electroneutral exchange of chloride for bicarbonate ions across the cell membrane. Plays an important role in osteoclast differentiation and function. Regulates bone resorption and calpain-dependent actin cytoskeleton organization in osteoclasts via anion exchange-dependent control of pH. Essential for intracellular pH regulation in CD8(+) T-cells upon CD3 stimulation, modulating CD8(+) T-cell response. This chain is Anion exchange protein 2 (SLC4A2), found in Oryctolagus cuniculus (Rabbit).